The primary structure comprises 363 residues: Melanoma-associated antigen B16 (363 aa).

Residues 33-124 (EPCSSPHLMA…PDQSDSTDLP (92 aa)) form a disordered region. Residues 82–97 (ASTSSDLQHPYDSSSE) are compositionally biased toward low complexity. An MAGE domain is found at 128 to 327 (VDGKVDFLVN…TVFLSQYEEA (200 aa)). The interval 342–363 (HADSSSTSGESSSDTSSNFSQV) is disordered.

The sequence is that of Melanoma-associated antigen B16 (Mageb16) from Mus musculus (Mouse).